A 121-amino-acid chain; its full sequence is UPF0102 protein Xfasm12_1748 (121 aa).

It belongs to the UPF0102 family.

The polypeptide is UPF0102 protein Xfasm12_1748 (Xylella fastidiosa (strain M12)).